We begin with the raw amino-acid sequence, 119 residues long: Immunoglobulin heavy variable 2-5 (119 aa).

The signal sequence occupies residues Met1–Ser19. Gln20 is modified (pyrrolidone carboxylic acid). Residues Gln20–Ser44 form a framework-1 region. The 100-residue stretch at Gln20–Arg119 folds into the Ig-like domain. Cys41 and Cys116 are oxidised to a cystine. Residues Gly45–Gly54 are complementarity-determining-1. A framework-2 region spans residues Val55 to Leu71. The tract at residues Ile72 to Lys78 is complementarity-determining-2. Positions Arg79 to Cys116 are framework-3. The interval Ala117–Arg119 is complementarity-determining-3.

As to quaternary structure, immunoglobulins are composed of two identical heavy chains and two identical light chains; disulfide-linked.

It localises to the secreted. The protein localises to the cell membrane. V region of the variable domain of immunoglobulin heavy chains that participates in the antigen recognition. Immunoglobulins, also known as antibodies, are membrane-bound or secreted glycoproteins produced by B lymphocytes. In the recognition phase of humoral immunity, the membrane-bound immunoglobulins serve as receptors which, upon binding of a specific antigen, trigger the clonal expansion and differentiation of B lymphocytes into immunoglobulins-secreting plasma cells. Secreted immunoglobulins mediate the effector phase of humoral immunity, which results in the elimination of bound antigens. The antigen binding site is formed by the variable domain of one heavy chain, together with that of its associated light chain. Thus, each immunoglobulin has two antigen binding sites with remarkable affinity for a particular antigen. The variable domains are assembled by a process called V-(D)-J rearrangement and can then be subjected to somatic hypermutations which, after exposure to antigen and selection, allow affinity maturation for a particular antigen. In Homo sapiens (Human), this protein is Immunoglobulin heavy variable 2-5.